The primary structure comprises 402 residues: Plasminogen activator inhibitor 1 (402 aa).

The signal sequence occupies residues 1-23 (MQMSPALTCLVLGLALVFGEGSA). N-linked (GlcNAc...) asparagine glycosylation is found at Asn-232, Asn-288, and Asn-352.

It belongs to the serpin family. As to quaternary structure, forms a heterodimer with TMPRSS7. Interacts with VTN. Binds LRP1B; binding is followed by internalization and degradation. Interacts with PPP1CB. In complex with PLAU/uPA, interacts with PLAUR/uPAR. Interacts with SORL1 and LRP1, either alone or in complex with PLAU; these interactions are abolished in the presence of LRPAP1/RAP. The ternary complex composed of PLAUR-PLAU-PAI1 also interacts with SORL1. Interacts with PLAT/tPA. Also interacts with SORL1, when complexed to PLAT/tPA. In terms of processing, inactivated by proteolytic attack of the urokinase-type (u-PA) and the tissue-type (TPA), cleaving the 369-Arg-|-Met-370 bond. Expressed in endothelial cells. Found in plasma, platelets, and hepatoma and fibrosarcoma cells.

It is found in the secreted. Functionally, serine protease inhibitor. Inhibits TMPRSS7. Is a primary inhibitor of tissue-type plasminogen activator (PLAT) and urokinase-type plasminogen activator (PLAU). As PLAT inhibitor, it is required for fibrinolysis down-regulation and is responsible for the controlled degradation of blood clots. As PLAU inhibitor, it is involved in the regulation of cell adhesion and spreading. Acts as a regulator of cell migration, independently of its role as protease inhibitor. It is required for stimulation of keratinocyte migration during cutaneous injury repair. It is involved in cellular and replicative senescence. Plays a role in alveolar type 2 cells senescence in the lung. Is involved in the regulation of cementogenic differentiation of periodontal ligament stem cells, and regulates odontoblast differentiation and dentin formation during odontogenesis. In Homo sapiens (Human), this protein is Plasminogen activator inhibitor 1 (SERPINE1).